The chain runs to 31 residues: Cytochrome b6-f complex subunit 6 (31 aa).

Residues 4–24 (LTSYFGFLLAALTITSVLFIG) form a helical membrane-spanning segment.

This sequence belongs to the PetL family. As to quaternary structure, the 4 large subunits of the cytochrome b6-f complex are cytochrome b6, subunit IV (17 kDa polypeptide, PetD), cytochrome f and the Rieske protein, while the 4 small subunits are PetG, PetL, PetM and PetN. The complex functions as a dimer.

The protein resides in the plastid. Its subcellular location is the chloroplast thylakoid membrane. Functionally, component of the cytochrome b6-f complex, which mediates electron transfer between photosystem II (PSII) and photosystem I (PSI), cyclic electron flow around PSI, and state transitions. PetL is important for photoautotrophic growth as well as for electron transfer efficiency and stability of the cytochrome b6-f complex. This chain is Cytochrome b6-f complex subunit 6, found in Silene conica (Striped corn catchfly).